The sequence spans 231 residues: ABC transporter ATP-binding protein YtrE (231 aa).

The ABC transporter domain maps to 4–231 (VQHIDHSFTI…VLKGGITVEV (228 aa)). 42–49 (GRSGSGKS) serves as a coordination point for ATP.

The protein belongs to the ABC transporter superfamily. In terms of assembly, the complex is composed of 2 ATP-binding proteins (YtrB and YtrE), 2 transmembrane proteins (YtrC and YtrD) and a solute-binding protein (YtrF).

The protein localises to the cell membrane. In terms of biological role, part of the ABC transporter complex YtrBCDEF that plays a role in acetoin utilization during stationary phase and sporulation. This is ABC transporter ATP-binding protein YtrE (ytrE) from Bacillus subtilis (strain 168).